Reading from the N-terminus, the 156-residue chain is Small ribosomal subunit protein uS7 (156 aa).

It belongs to the universal ribosomal protein uS7 family. Part of the 30S ribosomal subunit. Contacts proteins S9 and S11.

One of the primary rRNA binding proteins, it binds directly to 16S rRNA where it nucleates assembly of the head domain of the 30S subunit. Is located at the subunit interface close to the decoding center, probably blocks exit of the E-site tRNA. This Shewanella amazonensis (strain ATCC BAA-1098 / SB2B) protein is Small ribosomal subunit protein uS7.